The sequence spans 460 residues: GTPase Der (460 aa).

2 consecutive EngA-type G domains span residues 3-167 (FTFA…PEPD) and 189-364 (IRVA…ATWN). Residues 9–16 (GRPNVGKS), 56–60 (DTAGL), 119–122 (NKSE), 195–202 (GRPNAGKS), 242–246 (DTAGL), and 307–310 (NKWD) each bind GTP. The KH-like domain maps to 365 to 449 (RRVPTAALNR…PVRIMLREKA (85 aa)).

Belongs to the TRAFAC class TrmE-Era-EngA-EngB-Septin-like GTPase superfamily. EngA (Der) GTPase family. Associates with the 50S ribosomal subunit.

GTPase that plays an essential role in the late steps of ribosome biogenesis. This is GTPase Der from Rhodopseudomonas palustris (strain BisA53).